The following is a 381-amino-acid chain: Neuropeptide Y receptor type 2 (381 aa).

The segment at 1 to 37 is disordered; the sequence is MGPVGAEADENQTVEVKVEPYGPGHTTPRGELPPDPE. Residues 1 to 51 are Extracellular-facing; the sequence is MGPVGAEADENQTVEVKVEPYGPGHTTPRGELPPDPEPELIDSTKLVEVQV. N-linked (GlcNAc...) asparagine glycosylation is present at Asn-11. Residues 52–72 traverse the membrane as a helical segment; it reads ILILAYCSIILLGVVGNSLVI. The Cytoplasmic segment spans residues 73–86; it reads HVVIKFKSMRTVTN. The chain crosses the membrane as a helical span at residues 87–107; that stretch reads FFIANLAVADLLVNTLCLPFT. Residues 108-124 are Extracellular-facing; that stretch reads LTYTLMGEWKMGPVLCH. Residues Cys-123 and Cys-203 are joined by a disulfide bond. Residues 125-145 form a helical membrane-spanning segment; the sequence is LVPYAQGLAVQVSTITLTVIA. Topologically, residues 146 to 165 are cytoplasmic; that stretch reads LDRHRCIVYHLESKISKRIS. A helical transmembrane segment spans residues 166–186; it reads FLIIGLAWGISALLASPLAIF. Topologically, residues 187–216 are extracellular; sequence REYSLIEIIPDFEIVACTEKWPGEEKSVYG. The chain crosses the membrane as a helical span at residues 217–237; it reads TVYSLSTLLILYVLPLGIISF. Over 238–268 the chain is Cytoplasmic; sequence SYTRIWSKLRNHVSPGAASDHYHQRRHKMTK. Residues 269–289 form a helical membrane-spanning segment; sequence MLVCVVVVFAVSWLPLHAFQL. The Extracellular segment spans residues 290–304; the sequence is AVDIDSHVLDLKEYK. Residues 305–325 form a helical membrane-spanning segment; sequence LIFTVFHIIAMCSTFANPLLY. Residues 326–381 are Cytoplasmic-facing; sequence GWMNSNYRKAFLSAFRCEQRLDAIHSEVSMTFKAKKNLEVKKNNGPTDSFSEATNV. A lipid anchor (S-palmitoyl cysteine) is attached at Cys-342.

The protein belongs to the G-protein coupled receptor 1 family.

It is found in the cell membrane. Its function is as follows. Receptor for neuropeptide Y and peptide YY. This chain is Neuropeptide Y receptor type 2 (Npy2r), found in Mus musculus (Mouse).